The sequence spans 4377 residues: Ankyrin-3 (4377 aa).

The disordered stretch occupies residues 1-44 (MAHAASQLKKNRDLEINAEEEPEKKRKHRKRSRDRKKKSDANAS). The span at 25–38 (KRKHRKRSRDRKKK) shows a compositional bias: basic residues. Ser39 carries the phosphoserine modification. 23 ANK repeats span residues 73 to 102 (NGLN…NVDA), 106 to 135 (KGNT…NVNA), 139 to 168 (NGFT…SQSL), 172 to 201 (DGFT…KGKV), 203 to 230 (LPAL…NADV), 234 to 263 (SGFT…AVDF), 267 to 296 (NDIT…KIDA), 300 to 329 (DGLT…PILS), 333 to 362 (NGLS…PVDD), 366 to 395 (DYLT…NPNA), 399 to 428 (NGFT…SIQA), 432 to 461 (SGLT…SPNT), 465 to 494 (RGET…QVEA), 498 to 527 (DDQT…SPNA), 531 to 560 (SGYT…SLSI), 564 to 593 (KGFT…SPDA), 597 to 626 (SGLT…SPHA), 630 to 659 (NGYT…DANA), 663 to 692 (QGIA…NVNL), 696 to 725 (SGLT…HVDA), 729 to 758 (MGYT…KVNA), 762 to 791 (NGYT…SPNE), and 795 to 825 (NGNT…TMTT). Thr468 carries the post-translational modification Phosphoserine. Ser623 carries the phosphoserine modification. Residues Thr765 and Glu791 each carry the phosphoserine modification. A phosphoserine mark is found at Ser847, Ser861, Ser867, Ser913, Ser916, Ser922, Ser957, Ser959, and Ser1113. ZU5 domains lie at 984-1139 (FLVS…VVSR) and 1141-1288 (KQES…LADC). A UPA domain region spans residues 1273–1407 (VSFTTNVSAR…SIKIRDTSQE (135 aa)). A phosphoserine mark is found at Ser1445, Ser1459, and Ser1470. The segment covering 1519-1539 (SGFTSLSSSSSNTPSASPLKS) has biased composition (low complexity). A disordered region spans residues 1519 to 1540 (SGFTSLSSSSSNTPSASPLKSI). Residues Ser1622, Ser1625, Ser1632, Ile1651, Leu1658, Ser1984, Ser2111, Ser2123, and Ser2126 each carry the phosphoserine modification. 15 disordered regions span residues 1968–1987 (VDNK…SPED), 2107–2159 (TILE…VPIP), 2176–2245 (YDPS…EETH), 2299–2322 (AVSP…DNQM), 2383–2433 (FPCS…ISDD), 2474–2508 (DVSH…KIAT), 2588–2751 (LTEV…VKKI), 2795–2824 (QSNE…MPDS), 3036–3067 (PPLE…DVFD), 3131–3272 (TFYT…KKHH), 3298–3516 (PVIR…SVFP), 3538–3607 (KGLD…HEGK), 3635–3718 (GEHT…DPKL), 3868–3897 (KATS…QSEK), and 4019–4090 (KKMQ…CERT). Over residues 1977-1986 (PKSDKGHSPE) the composition is skewed to basic and acidic residues. Residues 2115–2136 (FSQHDQDKSPLSDSGFETRSEK) are compositionally biased toward basic and acidic residues. The segment covering 2137–2146 (TPSAPQSAES) has biased composition (polar residues). Positions 2299–2308 (AVSPDVHKSA) are enriched in basic and acidic residues. Over residues 2390–2399 (GQQEEEELTA) the composition is skewed to acidic residues. Over residues 2407–2417 (LESSRVNTPVS) the composition is skewed to polar residues. 2 stretches are compositionally biased toward basic and acidic residues: residues 2497–2508 (GSDKRSREKIAT) and 2588–2612 (LTEV…PEKK). Positions 2622-2631 (SSQSPTSSSP) are enriched in low complexity. Residues 2706–2716 (SGFQLKQSKLS) show a composition bias toward polar residues. Over residues 2720–2742 (LKFEQGTHAKSKDMSQEDRKSDG) the composition is skewed to basic and acidic residues. A compositionally biased stretch (polar residues) spans 2796–2807 (SNEIVVNDSGSD). Composition is skewed to polar residues over residues 3154–3186 (EQVS…SKTP) and 3214–3224 (KSTSLKQTTVE). Composition is skewed to basic and acidic residues over residues 3227-3242 (AVER…DSNQ) and 3335-3361 (KLKE…KELE). Residues 3377–3402 (SPQNEIAQNGNNDQSITECSIATTAE) are compositionally biased toward polar residues. Acidic residues predominate over residues 3409–3428 (ATEIDSLDGYDLQDEDDGLT). 2 stretches are compositionally biased toward basic and acidic residues: residues 3465-3481 (EVIE…DKPP) and 3549-3575 (RGDD…EDRS). The span at 3576–3598 (PATTPDTTPARTPTDESTPTSEP) shows a compositional bias: low complexity. Residues 3637 to 3651 (HTSEGKSGDQGEGDK) are compositionally biased toward basic and acidic residues. Polar residues-rich tracts occupy residues 3654-3669 (VTAT…TVET), 3676-3713 (ETPT…NTSK), 3880-3897 (HMSN…QSEK), and 4033-4052 (SRNT…VTTK). The segment covering 4053 to 4076 (SARDKKTEAAPLKSKSEKAGSEKR) has biased composition (basic and acidic residues). Residues 4090–4174 (TDIRMAIVAD…DIVTLLEGPI (85 aa)) form the Death domain. Residues Ser4211 and Ser4229 each carry the phosphoserine modification. Disordered stretches follow at residues 4251–4298 (NGSH…EPAS) and 4323–4377 (PVSM…KSHS). Polar residues predominate over residues 4268–4277 (PESQNDVGKQ). 2 positions are modified to phosphoserine: Ser4290 and Ser4298. Residues 4337–4347 (GKPRLSLHEEE) show a composition bias toward basic and acidic residues. A Phosphoserine modification is found at Ser4350. The segment covering 4362–4377 (VKTKKEIRHVEKKSHS) has biased composition (basic residues).

In terms of assembly, directly interacts with DMD and betaDAG1. This interaction does not interfere with binding between DMD and betaDAG1. It is also required for DMD and betaDAG1 retention at costameres. Interacts (via N-terminal ANK repeats) with SCHIP1 isoform 5 (via C-terminus); this interaction is required for the localization at axon initial segments (AISs) and nodes of Ranvier (NRs). May be a constituent of a NFASC/NRCAM/ankyrin G complex. Interacts with RHBG. Interacts with PLEC and FLNC. Interacts with KCNA1; this inhibits channel activity. Interacts (via ANK repeats) with IQCJ-SCHIP1; required for IQCJ-SCHIP1 localization at axon initial segments (AIS) and nodes of Ranvier. Interacts with SCHIP1. Interacts with SCN5A. Interacts with PKP2 and GJA1/CX43. Expressed in brain, neurons, muscles and other tissues.

It localises to the cytoplasm. The protein resides in the cytoskeleton. It is found in the cell projection. The protein localises to the axon. Its subcellular location is the cell membrane. It localises to the sarcolemma. The protein resides in the postsynaptic cell membrane. It is found in the lysosome. The protein localises to the T-tubule. Its subcellular location is the golgi apparatus. In terms of biological role, membrane-cytoskeleton linker. May participate in the maintenance/targeting of ion channels and cell adhesion molecules at the nodes of Ranvier and axonal initial segments. In skeletal muscle, required for costamere localization of DMD and betaDAG1. Regulates KCNA1 channel activity in function of dietary Mg(2+) levels, and thereby contributes to the regulation of renal Mg(2+) reabsorption. Required for intracellular adhesion and junctional conductance in myocytes, potentially via stabilization of GJA1/CX43 protein abundance and promotion of PKP2, GJA1/CX43, and SCN5A/Nav1.5 localization to cell-cell junctions. Its function is as follows. May be part of a Golgi-specific membrane cytoskeleton in association with beta-spectrin. This chain is Ankyrin-3, found in Homo sapiens (Human).